A 156-amino-acid polypeptide reads, in one-letter code: MVDVLGGRRLVTREGTVVEAEVALQNKVVALYFAAGRCSPSRDFTPLLCDFYTELVSEARRPAPFEVVFVSADGSAEEMLDFMRELHGSWLALPFHDPYRHELKKRYEITAIPKLVVIKQNGAVITNKGRKQIRERGLACFQNWVEAADVFQNFSG.

Positions 9 to 147 constitute a Thioredoxin domain; that stretch reads RLVTREGTVV…LACFQNWVEA (139 aa).

It belongs to the nucleoredoxin family. As to expression, both isoforms are expressed in retina, in the photoreceptor layer, and throughout the olfactory sensory neuron layer of the nasal epithelium, in neurons. Also expressed at low levels in brain and testis.

In terms of biological role, may be involved in the maintenance of both the function and the viability of sensory neurons, including photoreceptors and olfactory neurons. In the retina, isoform 1 may be required for rod function and isoform 2 for cone viability and function. The protein is Nucleoredoxin-like protein 2 (Nxnl2) of Mus musculus (Mouse).